Here is a 358-residue protein sequence, read N- to C-terminus: E3 ubiquitin-protein ligase RFI2 (358 aa).

A disordered region spans residues 1-34 (MAGAKDSGCDDDLRIAGGCDPGKRGNPEDSSSPV). Residues 38–83 (CSICLESVLDDGTRSKAKLQCGHQFHLDCIGSAFNMKGAMQCPNCR) form an RING-type; atypical zinc finger. 2 disordered regions span residues 174–201 (GPAATPRTSDNNSTDDHPWNSHSNDHFH) and 248–313 (SNQR…DQNV). Positions 187–201 (TDDHPWNSHSNDHFH) are enriched in basic and acidic residues. The span at 248–266 (SNQRSSPAINSYQGSSTQM) shows a compositional bias: polar residues. The span at 299-309 (LPPPPPPPPMP) shows a compositional bias: pro residues.

Its subcellular location is the nucleus. It carries out the reaction S-ubiquitinyl-[E2 ubiquitin-conjugating enzyme]-L-cysteine + [acceptor protein]-L-lysine = [E2 ubiquitin-conjugating enzyme]-L-cysteine + N(6)-ubiquitinyl-[acceptor protein]-L-lysine.. It participates in protein modification; protein ubiquitination. Its function is as follows. Mediates phytochrome (phyA and phyB)-controlled seedling deetiolation responses such as hypocotyl elongation in response to red and far-red light. Required for light-induced expression of LHCB3 and CHALCONE SYNTHASE (CHS). Negatively regulates CONSTANS (CO) and FLOWERING LOCUS T (FT) expression and photoperiodic flowering. The chain is E3 ubiquitin-protein ligase RFI2 from Arabidopsis thaliana (Mouse-ear cress).